We begin with the raw amino-acid sequence, 360 residues long: Peptide chain release factor 1 (360 aa).

Q235 carries the post-translational modification N5-methylglutamine. Residues 285-295 are compositionally biased toward basic and acidic residues; the sequence is RQAAEQADTRR. Positions 285 to 309 are disordered; the sequence is RQAAEQADTRRNLLGSGDRSDKIRT.

The protein belongs to the prokaryotic/mitochondrial release factor family. Methylated by PrmC. Methylation increases the termination efficiency of RF1.

Its subcellular location is the cytoplasm. Functionally, peptide chain release factor 1 directs the termination of translation in response to the peptide chain termination codons UAG and UAA. The polypeptide is Peptide chain release factor 1 (Actinobacillus pleuropneumoniae serotype 7 (strain AP76)).